We begin with the raw amino-acid sequence, 130 residues long: Small ribosomal subunit protein uS8 (130 aa).

The protein belongs to the universal ribosomal protein uS8 family. In terms of assembly, part of the 30S ribosomal subunit. Contacts proteins S5 and S12.

Functionally, one of the primary rRNA binding proteins, it binds directly to 16S rRNA central domain where it helps coordinate assembly of the platform of the 30S subunit. The polypeptide is Small ribosomal subunit protein uS8 (Acidiphilium cryptum (strain JF-5)).